The sequence spans 413 residues: MQAEIIAVGTEILMGQITNTNGAYMAKQLTALGIDSYHQQVVGDNGPRLEEAIKLAESRSNLVILIGGLGPTPDDLTKQTLAAHLNRKLVEDPDAMAKLQARVKQQQRPMTPNNQLQAMYPEGADILVNRVGLAVGAWIVNGQHTYVLLPGPPKEFVPMVDHELLPRLAKWSGHAEVMVSRVLRFFGIGESQLVTDLDDLIANQTDPTIATYIKDHEVTVRVTASGATEKDADAKLEPMVGAIMDRDGQYFYGYGDDNSLAKELVKTLAANDMQITAAESLTAGAFQAALGDVPGVSTYFKGGFVTYSLATKAAFLAIDARELAAHGVVSAFTAKAMAEHARRKAAADISVSFTGVAGPDTLEGQPAGTVWIGLARRGQLPEAHVYHFPGGRNDVRQRAVMTGMMLALRALQA.

This sequence belongs to the CinA family.

This Lacticaseibacillus paracasei (strain ATCC 334 / BCRC 17002 / CCUG 31169 / CIP 107868 / KCTC 3260 / NRRL B-441) (Lactobacillus paracasei) protein is Putative competence-damage inducible protein.